The sequence spans 438 residues: MSLSVSRRLAAVTAFAVAGLFASAVPAALAAPSAVAAAPTPPDIPLANVKAHLSQLSTIAANNGGNRAHGRAGYKASIDYVKGKLDAAGFTTTLQTFTSSGATGYNLIADWPGGDPNSVLMAGSHLDSVTSGAGINDNGSGSAAVLETALAVSRAGLQPTKHLRFGWWGAEELGLIGSKYYVNNLPAAEKAKISGYLNFDMIGSPNPGYFVYDDDPTIEQTFKNYYAGLGVPTEIETEGDGRSDHAPFKNAGIPVGGLFSGADYTKTAAQAQKWGGTSGQAFDRCYHSSCDSLTNINDTALDRNSDAVAYAIWTLGAGTPVPPGQSFENTADVNVPDSPAAAVSSPITVSGVTGNAPATTKVDVNIVHTYRGDLVVDLVAPDGTVYNLHNRSGGSADNLVQTYTVNASSEVANGVWNLRVKDTAAQDVGYINSWKITF.

The first 37 residues, 1–37, serve as a signal peptide directing secretion; the sequence is MSLSVSRRLAAVTAFAVAGLFASAVPAALAAPSAVAA. Histidine 125 and aspartate 137 together coordinate Zn(2+). The active-site Proton acceptor is glutamate 171. The Zn(2+) site is built by glutamate 172, aspartate 200, and histidine 287. A disulfide bridge links cysteine 285 with cysteine 290. Residues 321–438 enclose the P/Homo B domain; the sequence is VPPGQSFENT…GYINSWKITF (118 aa).

The protein belongs to the peptidase M28 family. M28A subfamily. Monomer. Requires Zn(2+) as cofactor.

Its subcellular location is the secreted. With respect to regulation, activity is inhibited by metalloprotease inhibitors and activated by Mg(2+) and Ca(2+). Functionally, a leucine-specific metalloprotease that plays a role in controlling the amount of leupeptin during colony development. Degrades leupeptin into three components, acetyl-leucine, leucine and argininal. Has a strict preference for leucine at the P1 site. The protein is Leupeptin-inactivating enzyme 1 (lieA) of Streptomyces exfoliatus (Streptomyces hydrogenans).